Reading from the N-terminus, the 256-residue chain is MAMPDVSLRQLLEAGVHFGHNTRRWNPRMAPFLFGVRNQVHIIDLQQTVPMLERALREIRNVTAGGGRVLFVGTKRAAAEHVAYAAKRCGQYYVNHRWLGGMLTNWKTITNSIRKLRQMEETLAGDGQGLTKKEMLNLMRERDKLDRALGGIKEMGGLPDILFIIDTNKEKLAVEEANKLGIPVVAVLDSNSNPEGVTYPIPGNDDAIRAITLYCDLVANAVLDGISAEMAASGADIGALEELPAEAVDEDAEAHA.

The protein belongs to the universal ribosomal protein uS2 family.

This chain is Small ribosomal subunit protein uS2, found in Acidiphilium cryptum (strain JF-5).